The sequence spans 534 residues: 2,3-bisphosphoglycerate-independent phosphoglycerate mutase (534 aa).

Residues aspartate 15 and serine 65 each contribute to the Mn(2+) site. The Phosphoserine intermediate role is filled by serine 65. Substrate is bound by residues histidine 126, 156-157 (RD), arginine 188, arginine 194, 260-263 (RPDR), and lysine 333. Mn(2+) is bound by residues aspartate 400, histidine 404, aspartate 441, histidine 442, and histidine 459.

The protein belongs to the BPG-independent phosphoglycerate mutase family. As to quaternary structure, monomer. It depends on Mn(2+) as a cofactor.

It carries out the reaction (2R)-2-phosphoglycerate = (2R)-3-phosphoglycerate. Its pathway is carbohydrate degradation; glycolysis; pyruvate from D-glyceraldehyde 3-phosphate: step 3/5. Catalyzes the interconversion of 2-phosphoglycerate and 3-phosphoglycerate. In Acaryochloris marina (strain MBIC 11017), this protein is 2,3-bisphosphoglycerate-independent phosphoglycerate mutase.